The sequence spans 232 residues: Biosynthetic peptidoglycan transglycosylase (232 aa).

A helical transmembrane segment spans residues 14–34 (AAVALVLLYQLWIFAHVLWWI).

Belongs to the glycosyltransferase 51 family.

It is found in the cell inner membrane. The catalysed reaction is [GlcNAc-(1-&gt;4)-Mur2Ac(oyl-L-Ala-gamma-D-Glu-L-Lys-D-Ala-D-Ala)](n)-di-trans,octa-cis-undecaprenyl diphosphate + beta-D-GlcNAc-(1-&gt;4)-Mur2Ac(oyl-L-Ala-gamma-D-Glu-L-Lys-D-Ala-D-Ala)-di-trans,octa-cis-undecaprenyl diphosphate = [GlcNAc-(1-&gt;4)-Mur2Ac(oyl-L-Ala-gamma-D-Glu-L-Lys-D-Ala-D-Ala)](n+1)-di-trans,octa-cis-undecaprenyl diphosphate + di-trans,octa-cis-undecaprenyl diphosphate + H(+). Its pathway is cell wall biogenesis; peptidoglycan biosynthesis. Peptidoglycan polymerase that catalyzes glycan chain elongation from lipid-linked precursors. This is Biosynthetic peptidoglycan transglycosylase from Thiobacillus denitrificans (strain ATCC 25259 / T1).